The sequence spans 321 residues: Nodulation protein D 1 (321 aa).

An HTH lysR-type domain is found at 6–63 (LDLNLLVALDALMTERKLTAAARSINLSQPAMSAAITRLRTYFRDELFTMNGRELVPT). Positions 23–42 (LTAAARSINLSQPAMSAAIT) form a DNA-binding region, H-T-H motif.

Belongs to the LysR transcriptional regulatory family.

NodD regulates the expression of the nodABCFE genes which encode other nodulation proteins. NodD is also a negative regulator of its own expression. Binds flavonoids as inducers. This is Nodulation protein D 1 (nodD1) from Bradyrhizobium japonicum.